Consider the following 98-residue polypeptide: Protein E7 (98 aa).

An E7 terminal domain region spans residues 1 to 42 (MHGRHVTLKDIVLDLQPPDPVGLHCYEQLVDSSEDEVDEVDG). The LXCXE motif; interaction with host RB1 and TMEM173/STING signature appears at 23–27 (LHCYE). A zinc finger spans residues 58-94 (CCGCDSNVRLVVQCTETDIREVQQLLLGTLDIVCPIC). The Nuclear export signal signature appears at 76–84 (IREVQQLLL).

It belongs to the papillomaviridae E7 protein family. Homodimer. Homooligomer. Interacts with host RB1; this interaction induces dissociation of RB1-E2F1 complex thereby disrupting RB1 activity. Interacts with host EP300; this interaction represses EP300 transcriptional activity. Interacts with protein E2; this interaction inhibits E7 oncogenic activity. Interacts with host TMEM173/STING; this interaction impairs the ability of TMEM173/STING to sense cytosolic DNA and promote the production of type I interferon (IFN-alpha and IFN-beta). Highly phosphorylated.

It is found in the host cytoplasm. The protein localises to the host nucleus. In terms of biological role, plays a role in viral genome replication by driving entry of quiescent cells into the cell cycle. Stimulation of progression from G1 to S phase allows the virus to efficiently use the cellular DNA replicating machinery to achieve viral genome replication. E7 protein has both transforming and trans-activating activities. Induces the disassembly of the E2F1 transcription factor from RB1, with subsequent transcriptional activation of E2F1-regulated S-phase genes. Interferes with host histone deacetylation mediated by HDAC1 and HDAC2, leading to transcription activation. Also plays a role in the inhibition of both antiviral and antiproliferative functions of host interferon alpha. Interaction with host TMEM173/STING impairs the ability of TMEM173/STING to sense cytosolic DNA and promote the production of type I interferon (IFN-alpha and IFN-beta). This is Protein E7 from Homo sapiens (Human).